Reading from the N-terminus, the 235-residue chain is Protein mxl-3 (235 aa).

Positions 18-49 are disordered; it reads EKQFRKRHHSDSSDDDSSSPKSASPSMDDDRR. The segment at 47–60 is basic motif; that stretch reads DRRAHHNELERRRR. One can recognise a bHLH domain in the interval 47–98; it reads DRRAHHNELERRRRDHIKDHFTILKDAIPLLDGEKSSRALILKRAVEFIHVM. The tract at residues 61–98 is helix-loop-helix motif; it reads DHIKDHFTILKDAIPLLDGEKSSRALILKRAVEFIHVM.

This sequence belongs to the MAX family. As to quaternary structure, may form homodimer. Interacts (via N-terminus) with skn-1 isoforms a and c. As to expression, expressed in the intestine and in the AWC sensory neurons.

The protein localises to the nucleus. It localises to the cytoplasm. Its function is as follows. Transcription factor which regulates the expression of genes involved in lipid metabolism in response to nutrient availability. Binds to the E-box motif 5'-CACGTG-3'. Under well-fed conditions, binds to the promoter and represses the expression of lipase genes lipl-1, lipl-2, lipl-3 and to a lesser extent lipl-5, thereby preventing lipolysis. In response to a high-glucose diet, promotes fatty acid synthesis, elongation and desaturation by up-regulating transcription factor sbp-1 expression. Under well-fed conditions, acts remotely in the intestine to up-regulate the expression of chemoreceptor srh-234 gene in the ADL sensory neuron, possibly by regulating the insulin signaling pathway. In Caenorhabditis elegans, this protein is Protein mxl-3.